A 172-amino-acid chain; its full sequence is EPIDERMAL PATTERNING FACTOR-like protein 7 (172 aa).

The N-terminal stretch at 1–27 (MDHVNPTLFHLKSLSIFTLTLLYISSP) is a signal peptide. 4 cysteine pairs are disulfide-bonded: Cys-128/Cys-159, Cys-132/Cys-138, Cys-135/Cys-161, and Cys-147/Cys-153.

It belongs to the plant cysteine rich small secretory peptide family. Epidermal patterning factor subfamily.

Its subcellular location is the secreted. In terms of biological role, controls stomatal patterning. The polypeptide is EPIDERMAL PATTERNING FACTOR-like protein 7 (Arabidopsis thaliana (Mouse-ear cress)).